Here is an 891-residue protein sequence, read N- to C-terminus: Inter-alpha-trypsin inhibitor heavy chain H3 (891 aa).

An N-terminal signal peptide occupies residues 1 to 20 (MALAQWPYLILALLSGLAVS). A propeptide spanning residues 21–34 (GFPRNPSLLLGKRS) is cleaved from the precursor. A VIT domain is found at 29–158 (LLGKRSLPGR…KVTFELTYEE (130 aa)). Asparagine 91 carries N-linked (GlcNAc...) asparagine glycosylation. Positions 284–467 (SVVFVIDVSG…LQLQGFYEEV (184 aa)) constitute a VWFA domain. Aspartate 1-(chondroitin 4-sulfate)-ester is present on aspartate 651. Residues 652-891 (PHFIIQIPEK…HRDYIVPNLF (240 aa)) constitute a propeptide that is removed on maturation.

It belongs to the ITIH family. As to quaternary structure, I-alpha-I plasma protease inhibitors are assembled from one or two heavy chains (H1, H2 or H3) and one light chain, bikunin. Inter-alpha-inhibitor (I-alpha-I) is composed of H1, H2 and bikunin, inter-alpha-like inhibitor (I-alpha-LI) of H2 and bikunin, and pre-alpha-inhibitor (P-alpha-I) of H3 and bikunin.

The protein localises to the secreted. May act as a carrier of hyaluronan in serum or as a binding protein between hyaluronan and other matrix protein, including those on cell surfaces in tissues to regulate the localization, synthesis and degradation of hyaluronan which are essential to cells undergoing biological processes. The chain is Inter-alpha-trypsin inhibitor heavy chain H3 (ITIH3) from Bos taurus (Bovine).